We begin with the raw amino-acid sequence, 192 residues long: UPF0149 protein YgfB (192 aa).

The protein belongs to the UPF0149 family.

In Escherichia coli O127:H6 (strain E2348/69 / EPEC), this protein is UPF0149 protein YgfB.